A 378-amino-acid chain; its full sequence is Ribosomal RNA large subunit methyltransferase G (378 aa).

The protein belongs to the methyltransferase superfamily. RlmG family.

Its subcellular location is the cytoplasm. It catalyses the reaction guanosine(1835) in 23S rRNA + S-adenosyl-L-methionine = N(2)-methylguanosine(1835) in 23S rRNA + S-adenosyl-L-homocysteine + H(+). Specifically methylates the guanine in position 1835 (m2G1835) of 23S rRNA. This Escherichia coli O9:H4 (strain HS) protein is Ribosomal RNA large subunit methyltransferase G.